We begin with the raw amino-acid sequence, 136 residues long: Active regulator of SIRT1 (136 aa).

Residue Arg-7 is modified to Citrulline. The tract at residues 13–58 is disordered; sequence LAASEAPRDPPGQAKPRGAPVKRPRKTKAIQAQKLRNSAKGKVPKS. At Ser-84 the chain carries Phosphoserine.

This sequence belongs to the AROS family. Part of the small subunit (SSU) processome, composed of more than 70 proteins and the RNA chaperone small nucleolar RNA (snoRNA) U3. Interacts with RPS19; the interaction is direct and mediates the integration of RPS19 in state post-A1. Interacts with SIRT1. In terms of processing, citrullinated by PADI4. As to expression, widely expressed (at protein level).

The protein resides in the nucleus. It localises to the nucleolus. Functionally, part of the small subunit (SSU) processome, first precursor of the small eukaryotic ribosomal subunit. During the assembly of the SSU processome in the nucleolus, many ribosome biogenesis factors, an RNA chaperone and ribosomal proteins associate with the nascent pre-rRNA and work in concert to generate RNA folding, modifications, rearrangements and cleavage as well as targeted degradation of pre-ribosomal RNA by the RNA exosome. Acts as a chaperone that specifically mediates the integration of RPS19 in state post-A1. Direct regulator of SIRT1. Enhances SIRT1-mediated deacetylation of p53/TP53, thereby participating in inhibition of p53/TP53-mediated transcriptional activity. The polypeptide is Active regulator of SIRT1 (Homo sapiens (Human)).